We begin with the raw amino-acid sequence, 788 residues long: Pyridoxal-dependent decarboxylase domain-containing protein 1 (788 aa).

The span at 28–40 (EDSQRRTEEENGK) shows a compositional bias: basic and acidic residues. The interval 28 to 51 (EDSQRRTEEENGKKLISGDIPGPL) is disordered. A Phosphothreonine modification is found at Thr-414. A Phosphoserine modification is found at Ser-652. The disordered stretch occupies residues 684–788 (AGVTLPPTPS…SQVEGPESLR (105 aa)). Phosphothreonine is present on residues Thr-687 and Thr-691. Phosphoserine occurs at positions 710, 718, and 722. Residues 725-734 (HIEDLEKVER) show a composition bias toward basic and acidic residues. Positions 738-750 (GPEQITLEASSTE) are enriched in polar residues. 4 positions are modified to phosphoserine: Ser-748, Ser-757, Ser-779, and Ser-786. A compositionally biased stretch (basic and acidic residues) spans 772–788 (PHPEDDHSQVEGPESLR).

Belongs to the group II decarboxylase family. The cofactor is pyridoxal 5'-phosphate.

This Homo sapiens (Human) protein is Pyridoxal-dependent decarboxylase domain-containing protein 1 (PDXDC1).